The primary structure comprises 561 residues: Foot protein 1 variant 1 (561 aa).

Positions 1-20 (MARNMNILTLFAVLIGSASA) are cleaved as a signal peptide. A 3',4'-dihydroxyphenylalanine modification is found at Tyr22. Pro33 is modified (4-hydroxyproline). Residues 41–50 (VHPPAWTAWK) form an A-1; approximate repeat. The segment at 41–410 (VHPPAWTAWK…APPPAWTAWK (370 aa)) is 13 X 10 AA A-P-P-P-A-W-T-A-W-K. 7'-hydroxytryptophan is present on residues Trp46, Trp49, Trp56, and Trp59. Residues Trp46, Trp49, Trp56, and Trp59 are each glycosylated (C-linked (Man) hydroxytryptophan). The A-2; approximate repeat unit spans residues 51–60 (AHPPAWTAWK). Residues 61–70 (ATPKPWTAWK) form a B-1 repeat. The segment at 61–440 (ATPKPWTAWK…ATPKPWTAWR (380 aa)) is 27 X 10 AA A-T-P-K-P-W-T-A-W-K. 4-hydroxyproline is present on Pro65. A glycan (C-linked (Man) tryptophan) is linked at Trp66. Position 69 is a 7'-hydroxytryptophan (Trp69). A glycan (C-linked (Man) hydroxytryptophan) is linked at Trp69. An A-3 repeat occupies 71–80 (APPPAWTAWK). Pro72, Pro73, and Pro74 each carry 4-hydroxyproline. 7'-hydroxytryptophan occurs at positions 76 and 79. Trp76 and Trp79 each carry a C-linked (Man) hydroxytryptophan glycan. The B-2 repeat unit spans residues 81–90 (ATPKPWTAWK). The residue at position 85 (Pro85) is a 4-hydroxyproline. A C-linked (Man) tryptophan glycan is attached at Trp86. The residue at position 89 (Trp89) is a 7'-hydroxytryptophan. C-linked (Man) hydroxytryptophan glycosylation is present at Trp89. An A-4; approximate repeat occupies 91–100 (APPPTWTAWK). 4-hydroxyproline occurs at positions 92, 93, and 94. 7'-hydroxytryptophan is present on residues Trp96 and Trp99. 2 C-linked (Man) hydroxytryptophan glycosylation sites follow: Trp96 and Trp99. One copy of the B-3 repeat lies at 101 to 110 (ATPKPWTAWK). Pro105 carries the 4-hydroxyproline modification. C-linked (Man) tryptophan glycosylation is present at Trp106. Trp109 carries the post-translational modification 7'-hydroxytryptophan. Trp109 carries a C-linked (Man) hydroxytryptophan glycan. The stretch at 111-120 (APPPAWTAWK) is one A-5 repeat. Residues Pro112, Pro113, and Pro114 each carry the 4-hydroxyproline modification. Trp116 and Trp119 each carry 7'-hydroxytryptophan. C-linked (Man) hydroxytryptophan glycosylation is found at Trp116 and Trp119. The stretch at 121–130 (ATLKPWTAWK) is one B-4; approximate repeat. 4-hydroxyproline is present on Pro125. C-linked (Man) tryptophan glycosylation is present at Trp126. The residue at position 129 (Trp129) is a 7'-hydroxytryptophan. Residue Trp129 is glycosylated (C-linked (Man) hydroxytryptophan). A B-5 repeat occupies 131 to 140 (ATPKPWTAWK). The residue at position 135 (Pro135) is a 4-hydroxyproline. Trp136 is a glycosylation site (C-linked (Man) tryptophan). Trp139 is modified (7'-hydroxytryptophan). Trp139 is a glycosylation site (C-linked (Man) hydroxytryptophan). The stretch at 141-150 (ATPKPWTAWK) is one B-6 repeat. Pro145 bears the 4-hydroxyproline mark. A glycan (C-linked (Man) tryptophan) is linked at Trp146. Trp149 is modified (7'-hydroxytryptophan). Trp149 carries C-linked (Man) hydroxytryptophan glycosylation. Residues 151-160 (ATPKPWTAWK) form a B-7 repeat. Residue Pro155 is modified to 4-hydroxyproline. The C-linked (Man) tryptophan glycan is linked to Trp156. Trp159 bears the 7'-hydroxytryptophan mark. Trp159 carries C-linked (Man) hydroxytryptophan glycosylation. A B-8 repeat occupies 161 to 170 (ATPKPWTAWK). Pro165 carries the post-translational modification 4-hydroxyproline. Residue Trp166 is glycosylated (C-linked (Man) tryptophan). Trp169 is modified (7'-hydroxytryptophan). Trp169 is a glycosylation site (C-linked (Man) hydroxytryptophan). Residues 171–180 (ATPKPWTVWK) form a B-9; approximate repeat. Pro175 carries the post-translational modification 4-hydroxyproline. Residue Trp176 is glycosylated (C-linked (Man) tryptophan). Trp179 carries the 7'-hydroxytryptophan modification. C-linked (Man) hydroxytryptophan glycosylation occurs at Trp179. A B-10 repeat occupies 181-190 (ATPKPWTAWK). A 4-hydroxyproline modification is found at Pro185. A C-linked (Man) tryptophan glycan is attached at Trp186. A 7'-hydroxytryptophan modification is found at Trp189. Trp189 carries a C-linked (Man) hydroxytryptophan glycan. Residues 191 to 200 (ATPKPWTAWK) form a B-11 repeat. A 4-hydroxyproline modification is found at Pro195. A glycan (C-linked (Man) tryptophan) is linked at Trp196. Trp199 bears the 7'-hydroxytryptophan mark. The C-linked (Man) hydroxytryptophan glycan is linked to Trp199. The A-6; approximate repeat unit spans residues 201–210 (APPPAWSAWK). Residues Pro202, Pro203, and Pro204 each carry the 4-hydroxyproline modification. Trp206 and Trp209 each carry 7'-hydroxytryptophan. Residues Trp206 and Trp209 are each glycosylated (C-linked (Man) hydroxytryptophan). Residues 211–220 (ATPKPWTVWK) form a B-12; approximate repeat. Residue Pro215 is modified to 4-hydroxyproline. A glycan (C-linked (Man) tryptophan) is linked at Trp216. A 7'-hydroxytryptophan modification is found at Trp219. Trp219 carries a C-linked (Man) hydroxytryptophan glycan. The B-13 repeat unit spans residues 221 to 230 (ATPKPWTAWK). Position 225 is a 4-hydroxyproline (Pro225). Trp226 is a glycosylation site (C-linked (Man) tryptophan). A 7'-hydroxytryptophan modification is found at Trp229. The C-linked (Man) hydroxytryptophan glycan is linked to Trp229. A B-14 repeat occupies 231–240 (ATPKPWTAWK). Pro235 carries the 4-hydroxyproline modification. Trp236 is a glycosylation site (C-linked (Man) tryptophan). 7'-hydroxytryptophan is present on Trp239. C-linked (Man) hydroxytryptophan glycosylation is present at Trp239. The B-15; approximate repeat unit spans residues 241-250 (ATPKPWTVWK). Pro245 carries the 4-hydroxyproline modification. Residue Trp246 is glycosylated (C-linked (Man) tryptophan). Residue Trp249 is modified to 7'-hydroxytryptophan. A C-linked (Man) hydroxytryptophan glycan is attached at Trp249. A B-16 repeat occupies 251–260 (ATPKPWTAWK). Pro255 is subject to 4-hydroxyproline. A C-linked (Man) tryptophan glycan is attached at Trp256. A 7'-hydroxytryptophan modification is found at Trp259. A C-linked (Man) hydroxytryptophan glycan is attached at Trp259. One copy of the A-7 repeat lies at 261 to 270 (APPPAWTAWK). 3 positions are modified to 4-hydroxyproline: Pro262, Pro263, and Pro264. 7'-hydroxytryptophan is present on residues Trp266 and Trp269. C-linked (Man) hydroxytryptophan glycans are attached at residues Trp266 and Trp269. One copy of the B-17 repeat lies at 271 to 280 (ATPKPWTAWK). Pro275 is modified (4-hydroxyproline). Trp276 is a glycosylation site (C-linked (Man) tryptophan). A 7'-hydroxytryptophan modification is found at Trp279. A glycan (C-linked (Man) hydroxytryptophan) is linked at Trp279. One copy of the A-8; approximate repeat lies at 281–290 (APPPTWTAWK). Pro282, Pro283, and Pro284 each carry 4-hydroxyproline. 2 positions are modified to 7'-hydroxytryptophan: Trp286 and Trp289. Trp286 and Trp289 each carry a C-linked (Man) hydroxytryptophan glycan. The B-18 repeat unit spans residues 291-300 (ATPKPWTAWK). Pro295 carries the post-translational modification 4-hydroxyproline. A C-linked (Man) tryptophan glycan is attached at Trp296. Trp299 is modified (7'-hydroxytryptophan). Trp299 is a glycosylation site (C-linked (Man) hydroxytryptophan). An A-9; approximate repeat occupies 301–310 (APPPAWSAWK). 4-hydroxyproline occurs at positions 302, 303, and 304. A 7'-hydroxytryptophan mark is found at Trp306 and Trp309. Trp306 and Trp309 each carry a C-linked (Man) hydroxytryptophan glycan. Residues 311-320 (ATPKPWTAWK) form a B-19 repeat. Position 315 is a 4-hydroxyproline (Pro315). A glycan (C-linked (Man) tryptophan) is linked at Trp316. Trp319 carries the post-translational modification 7'-hydroxytryptophan. A C-linked (Man) hydroxytryptophan glycan is attached at Trp319. One copy of the B-20 repeat lies at 321–330 (ATPKPWTAWK). Pro325 carries the post-translational modification 4-hydroxyproline. A C-linked (Man) tryptophan glycan is attached at Trp326. Trp329 is modified (7'-hydroxytryptophan). Residue Trp329 is glycosylated (C-linked (Man) hydroxytryptophan). The stretch at 331–340 (ATPKPWTAWK) is one B-21 repeat. Residue Pro335 is modified to 4-hydroxyproline. A C-linked (Man) tryptophan glycan is attached at Trp336. Residue Trp339 is modified to 7'-hydroxytryptophan. A glycan (C-linked (Man) hydroxytryptophan) is linked at Trp339. A B-22 repeat occupies 341-350 (ATPKPWTAWK). Pro345 bears the 4-hydroxyproline mark. Residue Trp346 is glycosylated (C-linked (Man) tryptophan). Trp349 bears the 7'-hydroxytryptophan mark. C-linked (Man) hydroxytryptophan glycosylation is present at Trp349. The stretch at 351–360 (VPPPAWTAWK) is one A-10; approximate repeat. Residues Pro352, Pro353, and Pro354 each carry the 4-hydroxyproline modification. Residues Trp356, Trp359, Trp366, and Trp369 each carry the 7'-hydroxytryptophan modification. Trp356, Trp359, Trp366, and Trp369 each carry a C-linked (Man) hydroxytryptophan glycan. An A-11; approximate repeat occupies 361–370 (AHPPAWTAWK). The B-23 repeat unit spans residues 371-380 (ATPKPWTAWK). 4-hydroxyproline is present on Pro375. A glycan (C-linked (Man) tryptophan) is linked at Trp376. Residue Trp379 is modified to 7'-hydroxytryptophan. C-linked (Man) hydroxytryptophan glycosylation is present at Trp379. The stretch at 381 to 390 (APPPAWTAWK) is one A-12 repeat. 4-hydroxyproline occurs at positions 382, 383, and 384. 2 positions are modified to 7'-hydroxytryptophan: Trp386 and Trp389. Trp386 and Trp389 each carry a C-linked (Man) hydroxytryptophan glycan. One copy of the B-24 repeat lies at 391–400 (ATPKPWTAWK). 4-hydroxyproline is present on Pro395. Trp396 carries a C-linked (Man) tryptophan glycan. Position 399 is a 7'-hydroxytryptophan (Trp399). Trp399 carries C-linked (Man) hydroxytryptophan glycosylation. The stretch at 401 to 410 (APPPAWTAWK) is one A-13 repeat. 3 positions are modified to 4-hydroxyproline: Pro402, Pro403, and Pro404. Residues Trp406 and Trp409 each carry the 7'-hydroxytryptophan modification. C-linked (Man) hydroxytryptophan glycans are attached at residues Trp406 and Trp409. One copy of the B-25 repeat lies at 411–420 (ATPKPWTAWK). Position 415 is a 4-hydroxyproline (Pro415). The C-linked (Man) tryptophan glycan is linked to Trp416. The residue at position 419 (Trp419) is a 7'-hydroxytryptophan. A glycan (C-linked (Man) hydroxytryptophan) is linked at Trp419. A B-26; approximate repeat occupies 421–430 (ATPKPWTVWK). Pro425 bears the 4-hydroxyproline mark. Trp426 is a glycosylation site (C-linked (Man) tryptophan). Trp429 carries the 7'-hydroxytryptophan modification. Trp429 is a glycosylation site (C-linked (Man) hydroxytryptophan). One copy of the B-27; approximate repeat lies at 431-440 (ATPKPWTAWR). Residue Pro435 is modified to 4-hydroxyproline. A glycan (C-linked (Man) tryptophan) is linked at Trp436. At Trp439 the chain carries 7'-hydroxytryptophan. A C-linked (Man) hydroxytryptophan glycan is attached at Trp439. Residues 452–507 (GHGYGGYGKPGKPGKPGSKGPRGPAGPPGATGKTGRTGATGKRGPPGYPGKPGVPG) are disordered. Gly residues predominate over residues 453 to 462 (HGYGGYGKPG). Residues 459–510 (GKPGKPGKPGSKGPRGPAGPPGATGKTGRTGATGKRGPPGYPGKPGVPGRNG) enclose the Collagen-like domain. Residues 466-496 (KPGSKGPRGPAGPPGATGKTGRTGATGKRGP) are compositionally biased toward low complexity. Pro497, Pro500, and Pro506 each carry 4-hydroxyproline.

As to expression, produced by the byssal gland.

Its subcellular location is the secreted. Functionally, provides adhesiveness to the mussel's foot. Mussels produce one of the strongest water insoluble glues. The mussel's adhesive is a bundle of threads, called a byssus, formed by a fibrous collagenous core coated with adhesive proteins. This chain is Foot protein 1 variant 1, found in Perna viridis (Asian green mussel).